The sequence spans 314 residues: S-methyl-5'-thioadenosine phosphorylase (314 aa).

Phosphate is bound by residues S31, 73-74 (RH), and 106-107 (SA). M207 serves as a coordination point for substrate. T208 serves as a coordination point for phosphate. 231 to 233 (DYD) provides a ligand contact to substrate.

Belongs to the PNP/MTAP phosphorylase family. MTAP subfamily. As to quaternary structure, homohexamer. Dimer of a homotrimer.

The catalysed reaction is S-methyl-5'-thioadenosine + phosphate = 5-(methylsulfanyl)-alpha-D-ribose 1-phosphate + adenine. It participates in amino-acid biosynthesis; L-methionine biosynthesis via salvage pathway; S-methyl-5-thio-alpha-D-ribose 1-phosphate from S-methyl-5'-thioadenosine (phosphorylase route): step 1/1. In terms of biological role, catalyzes the reversible phosphorylation of S-methyl-5'-thioadenosine (MTA) to adenine and 5-methylthioribose-1-phosphate. Involved in the breakdown of MTA, a major by-product of polyamine biosynthesis. Responsible for the first step in the methionine salvage pathway after MTA has been generated from S-adenosylmethionine. Has broad substrate specificity with 6-aminopurine nucleosides as preferred substrates. This is S-methyl-5'-thioadenosine phosphorylase from Prochlorococcus marinus (strain SARG / CCMP1375 / SS120).